The sequence spans 308 residues: D-alanine--D-alanine ligase (308 aa).

In terms of domain architecture, ATP-grasp spans 103 to 302 (KTVMKTAGVP…FDELVQWMVE (200 aa)). 130 to 184 (MEPPYVIKPVADGSSVGVYIITEQHQHPPQELFRDDWAYGDKLLVEKYVAGKELT) is a binding site for ATP. Positions 252, 269, and 271 each coordinate Mg(2+).

This sequence belongs to the D-alanine--D-alanine ligase family. It depends on Mg(2+) as a cofactor. Mn(2+) is required as a cofactor.

The protein localises to the cytoplasm. The enzyme catalyses 2 D-alanine + ATP = D-alanyl-D-alanine + ADP + phosphate + H(+). It participates in cell wall biogenesis; peptidoglycan biosynthesis. Its function is as follows. Cell wall formation. The protein is D-alanine--D-alanine ligase of Rhodopseudomonas palustris (strain BisA53).